We begin with the raw amino-acid sequence, 224 residues long: Uracil-DNA glycosylase (224 aa).

Aspartate 64 serves as the catalytic Proton acceptor.

The protein belongs to the uracil-DNA glycosylase (UDG) superfamily. UNG family.

It is found in the cytoplasm. It carries out the reaction Hydrolyzes single-stranded DNA or mismatched double-stranded DNA and polynucleotides, releasing free uracil.. Its function is as follows. Excises uracil residues from the DNA which can arise as a result of misincorporation of dUMP residues by DNA polymerase or due to deamination of cytosine. This chain is Uracil-DNA glycosylase, found in Clostridioides difficile (strain 630) (Peptoclostridium difficile).